The sequence spans 403 residues: Octaketide synthase 1 (403 aa).

C174 is an active-site residue. CoA is bound by residues S281 and 318–321; that span reads GGRA.

Belongs to the thiolase-like superfamily. Chalcone/stilbene synthases family. Homodimer.

It functions in the pathway secondary metabolite biosynthesis; flavonoid biosynthesis. Its function is as follows. Catalyzes the iterative condensations of 8 molecules of malonyl-CoA to produce aromatic octaketides, SEK4 and SEK4b, the products of the minimal polyketide synthase for the benzoisochromanequinone actinorhodin. May be involved in the biosynthesis of the octaketide barbaloin. The chain is Octaketide synthase 1 from Aloe arborescens (Kidachi aloe).